The primary structure comprises 177 residues: Endoribonuclease YbeY (177 aa).

H118, H122, and H128 together coordinate Zn(2+).

This sequence belongs to the endoribonuclease YbeY family. Zn(2+) is required as a cofactor.

The protein resides in the cytoplasm. Functionally, single strand-specific metallo-endoribonuclease involved in late-stage 70S ribosome quality control and in maturation of the 3' terminus of the 16S rRNA. The protein is Endoribonuclease YbeY of Mycobacterium bovis (strain ATCC BAA-935 / AF2122/97).